The primary structure comprises 434 residues: UDP-N-acetylglucosamine 1-carboxyvinyltransferase (434 aa).

34–35 (KN) lines the phosphoenolpyruvate pocket. R104 contacts UDP-N-acetyl-alpha-D-glucosamine. The Proton donor role is filled by C128. C128 carries the 2-(S-cysteinyl)pyruvic acid O-phosphothioketal modification. 2 residues coordinate UDP-N-acetyl-alpha-D-glucosamine: D319 and I341.

The protein belongs to the EPSP synthase family. MurA subfamily.

Its subcellular location is the cytoplasm. It catalyses the reaction phosphoenolpyruvate + UDP-N-acetyl-alpha-D-glucosamine = UDP-N-acetyl-3-O-(1-carboxyvinyl)-alpha-D-glucosamine + phosphate. Its pathway is cell wall biogenesis; peptidoglycan biosynthesis. Cell wall formation. Adds enolpyruvyl to UDP-N-acetylglucosamine. The polypeptide is UDP-N-acetylglucosamine 1-carboxyvinyltransferase (Prochlorococcus marinus (strain MIT 9313)).